Here is a 215-residue protein sequence, read N- to C-terminus: uncharacterized protein (215 aa).

The protein belongs to the mimivirus L31/R44 family.

This is an uncharacterized protein from Acanthamoeba polyphaga (Amoeba).